Here is a 118-residue protein sequence, read N- to C-terminus: V-type proton ATPase subunit G 3 (118 aa).

A compositionally biased stretch (polar residues) spans 1 to 12; sequence MTSQSQGIQQLL. The segment at 1–44 is disordered; that stretch reads MTSQSQGIQQLLQAEKRAKDKLDEAKKRKGKRLRQAKEEAVAET. A coiled-coil region spans residues 5 to 53; the sequence is SQGIQQLLQAEKRAKDKLDEAKKRKGKRLRQAKEEAVAETDQYRMQMEK. Positions 14–26 are enriched in basic and acidic residues; it reads AEKRAKDKLDEAK.

Belongs to the V-ATPase G subunit family. V-ATPase is a heteromultimeric enzyme made up of two complexes: the ATP-hydrolytic V1 complex and the proton translocation V0 complex. The V1 complex consists of three catalytic AB heterodimers that form a heterohexamer, three peripheral stalks each consisting of EG heterodimers, one central rotor including subunits D and F, and the regulatory subunits C and H. The proton translocation complex V0 consists of the proton transport subunit a, a ring of proteolipid subunits c9c'', rotary subunit d, subunits e and f, and the accessory subunits ATP6AP1/Ac45 and ATP6AP2/PRR. In terms of tissue distribution, kidney.

Subunit of the V1 complex of vacuolar(H+)-ATPase (V-ATPase), a multisubunit enzyme composed of a peripheral complex (V1) that hydrolyzes ATP and a membrane integral complex (V0) that translocates protons. V-ATPase is responsible for acidifying and maintaining the pH of intracellular compartments and in some cell types, is targeted to the plasma membrane, where it is responsible for acidifying the extracellular environment. In Mus musculus (Mouse), this protein is V-type proton ATPase subunit G 3 (Atp6v1g3).